The sequence spans 360 residues: MGLRTPLYELHVALGAKMVDFGGWDMPLHYGSQVEEHHQVRRDCGVFDVSHMTVVDVAGEQATAYLQHLLANDVARLGETGKALYSAMLNEEGGVVDDLIVYLTEHGYRVVVNASTRDKDIAWMQAQAAGFKVDLQERGDLAMLAIQGPNARVHSSELVSPARAALIRELKPFQGRAEGDWFIARTGYTGEDGLEIMLPAAEAPGFLNELVGAGISPAGLGARDTLRLEAGLNLYGQDMDESVSPLAANMGWTVAWEPVARDFVGRRALEAQKAAGDQPKLVGLVLEERGVLRAHQVVRVAGIGEGEITSGSFSPTLNKSIALARVPAATGDRAEVEIRGKWYPVRVVQPSFVRHGKPLI.

The protein belongs to the GcvT family. In terms of assembly, the glycine cleavage system is composed of four proteins: P, T, L and H.

It catalyses the reaction N(6)-[(R)-S(8)-aminomethyldihydrolipoyl]-L-lysyl-[protein] + (6S)-5,6,7,8-tetrahydrofolate = N(6)-[(R)-dihydrolipoyl]-L-lysyl-[protein] + (6R)-5,10-methylene-5,6,7,8-tetrahydrofolate + NH4(+). In terms of biological role, the glycine cleavage system catalyzes the degradation of glycine. The sequence is that of Aminomethyltransferase from Pseudomonas aeruginosa (strain ATCC 15692 / DSM 22644 / CIP 104116 / JCM 14847 / LMG 12228 / 1C / PRS 101 / PAO1).